Reading from the N-terminus, the 605-residue chain is Formin-binding protein 1-like (605 aa).

The F-BAR domain maps to 1–263 (MSWGTELWDQ…AAKSVDERRD (263 aa)). Positions 66–258 (FTSCIAFFNI…EGMILAAKSV (193 aa)) form a coiled coil. The tract at residues 245–535 (SKCLEGMILA…EFDDEFEDDD (291 aa)) is interaction with CDC42. Ser-295 bears the Phosphoserine mark. The interval 325-345 (FGKKPKPQSPPLTPTSLFTSS) is disordered. The stretch at 392–484 (LEDFSHLPPE…VEGKTGVRGD (93 aa)) forms a coiled coil. The REM-1 domain occupies 397 to 474 (HLPPEQRRKK…IHKNEAWLSE (78 aa)). A compositionally biased stretch (basic and acidic residues) spans 480–490 (GVRGDRRHSSD). The segment at 480 to 539 (GVRGDRRHSSDINHLVTQGRESPEGSYTDDANQEVRGPPQQHGHHSEFDDEFEDDDPLPA) is disordered. Phosphoserine occurs at positions 488, 501, and 505. The interaction with DNM1 stretch occupies residues 522–605 (GHHSEFDDEF…VTLEKNSKGS (84 aa)). Residues 527-536 (FDDEFEDDDP) show a composition bias toward acidic residues. One can recognise an SH3 domain in the interval 538-599 (PAIGHCKAIY…PTTYIDVTLE (62 aa)). Residues 541 to 597 (GHCKAIYPFDGHNEGTLAMKEGEVLYIIEEDKGDGWTRARRQNGEEGYVPTTYIDVT) are interaction with DNM2 and WASL. The interaction with DAAM1, DIAPH1 and DIAPH2 stretch occupies residues 541 to 605 (GHCKAIYPFD…VTLEKNSKGS (65 aa)).

The protein belongs to the FNBP1 family. In terms of assembly, homodimerizes, the dimers can polymerize end-to-end to form filamentous structures. Interacts with GTP-bound CDC42. Interacts with DAAM1, DIAPH1, DIAPH2, DNM1, DNM2 and WASL/N-WASP. Interacts with ATG3. Interacts (via SH3 domain) with ABI1, WASF2, CDC42 and WIPF1. Isoform 1 is expressed in brain. Isoform 2 is expressed in brain, kidney and lung. Within the brain expression is seen in cortical neurons, hippocampal pyramidal neurons, hypothalamus and piriform cortex.

Its subcellular location is the cytoplasm. It localises to the cytoskeleton. The protein localises to the cell cortex. The protein resides in the cytoplasmic vesicle. It is found in the cell membrane. Its function is as follows. Required to coordinate membrane tubulation with reorganization of the actin cytoskeleton during endocytosis. May bind to lipids such as phosphatidylinositol 4,5-bisphosphate and phosphatidylserine and promote membrane invagination and the formation of tubules. Also promotes CDC42-induced actin polymerization by activating the WASL-WASPIP complex, the predominant form of WASL/N-WASP in cells. Actin polymerization may promote the fission of membrane tubules to form endocytic vesicles. Essential for autophagy of intracellular bacterial pathogens. May negatively regulate neurite extension and axon branching in developing neurons. The sequence is that of Formin-binding protein 1-like (Fnbp1l) from Rattus norvegicus (Rat).